Reading from the N-terminus, the 349-residue chain is Dihydroorotase (349 aa).

Zn(2+) is bound by residues His17 and His19. Substrate-binding positions include 19-21 (HLR) and Asn45. 3 residues coordinate Zn(2+): Lys105, His142, and His180. Lys105 carries the N6-carboxylysine modification. Position 142 (His142) interacts with substrate. Leu225 serves as a coordination point for substrate. Asp253 is a Zn(2+) binding site. Residue Asp253 is part of the active site. Residues His257 and Ala269 each contribute to the substrate site.

The protein belongs to the metallo-dependent hydrolases superfamily. DHOase family. Class II DHOase subfamily. Homodimer. Zn(2+) is required as a cofactor.

It carries out the reaction (S)-dihydroorotate + H2O = N-carbamoyl-L-aspartate + H(+). The protein operates within pyrimidine metabolism; UMP biosynthesis via de novo pathway; (S)-dihydroorotate from bicarbonate: step 3/3. Its function is as follows. Catalyzes the reversible cyclization of carbamoyl aspartate to dihydroorotate. In Nitrosomonas europaea (strain ATCC 19718 / CIP 103999 / KCTC 2705 / NBRC 14298), this protein is Dihydroorotase.